The sequence spans 135 residues: MLSPQKTRFRKQHRGRMKGISYRGNNICFGKYGLKALEPAWITPRQIEAGRRAITRKFRRGGKIWVRVFPDKPVTVRSSETRMGSGKGSHKYFVAVVKPGLILYEIGGVTENIAKRAILIAASKMPMQTQFIISG.

The protein belongs to the universal ribosomal protein uL16 family. Part of the 50S ribosomal subunit.

It localises to the plastid. This chain is Large ribosomal subunit protein uL16c, found in Epifagus virginiana (Beechdrops).